A 259-amino-acid chain; its full sequence is Methyltransferase afvD (259 aa).

This sequence belongs to the class I-like SAM-binding methyltransferase superfamily.

The protein operates within secondary metabolite biosynthesis. Functionally, methyltransferase; part of the gene cluster that mediates the biosynthesis of aflavarin, a bicoumarin that exhibits anti-insectan activity against the fungivorous beetle C.hemipterus. In Aspergillus flavus (strain ATCC 200026 / FGSC A1120 / IAM 13836 / NRRL 3357 / JCM 12722 / SRRC 167), this protein is Methyltransferase afvD.